We begin with the raw amino-acid sequence, 125 residues long: MGPGGPLLSPSRGFLLCKTGWHSNRLLGDCGPHTPVSTALSFIAVGMAAPSMKERQVCWGARDEYWKCLDENLEDASQCKKLRSSFESSCPQQWIKYFDKRRDYLKFKEKFEAGQFEPSETTAKS.

Glycine 2 carries the post-translational modification N-acetylalanine. A CHCH domain is found at 55-98; that stretch reads RQVCWGARDEYWKCLDENLEDASQCKKLRSSFESSCPQQWIKYF. A Cx9C motif motif is present at residues 58–68; that stretch reads CWGARDEYWKC. Disulfide bonds link cysteine 58–cysteine 90 and cysteine 68–cysteine 79. A Cx10C motif motif is present at residues 79–90; that stretch reads CKKLRSSFESSC.

Belongs to the cytochrome c oxidase subunit 6B family. Interacts with COA1. Found in a complex with TMEM177, COX20, MT-CO2/COX2, COX18, SCO1 and SCO2. Interacts with MT-CO2/COX2 and SCO2. Interacts with SCO1. Interacts with COX20 in a MT-CO2/COX2- and COX18-dependent manner. Interacts with COX16.

It localises to the mitochondrion intermembrane space. Its function is as follows. Involved in the maturation of the mitochondrial respiratory chain complex IV subunit MT-CO2/COX2. Thereby, may regulate early steps of complex IV assembly. Mitochondrial respiratory chain complex IV or cytochrome c oxidase is the component of the respiratory chain that catalyzes the transfer of electrons from intermembrane space cytochrome c to molecular oxygen in the matrix and as a consequence contributes to the proton gradient involved in mitochondrial ATP synthesis. May also be required for efficient formation of respiratory supercomplexes comprised of complexes III and IV. The chain is Cytochrome c oxidase assembly factor 6 homolog (COA6) from Homo sapiens (Human).